The chain runs to 418 residues: Tyrosine--tRNA ligase (418 aa).

Tyrosine 34 contributes to the L-tyrosine binding site. The short motif at 39 to 48 is the 'HIGH' region element; sequence PTADSLHLGH. Tyrosine 169 and glutamine 173 together coordinate L-tyrosine. The short motif at 229 to 233 is the 'KMSKS' region element; sequence KFGKS. Lysine 232 provides a ligand contact to ATP. The 67-residue stretch at 352–418 folds into the S4 RNA-binding domain; the sequence is NNIVELLVSS…GKKKYFVLTY (67 aa).

This sequence belongs to the class-I aminoacyl-tRNA synthetase family. TyrS type 1 subfamily. In terms of assembly, homodimer.

The protein localises to the cytoplasm. It carries out the reaction tRNA(Tyr) + L-tyrosine + ATP = L-tyrosyl-tRNA(Tyr) + AMP + diphosphate + H(+). In terms of biological role, catalyzes the attachment of tyrosine to tRNA(Tyr) in a two-step reaction: tyrosine is first activated by ATP to form Tyr-AMP and then transferred to the acceptor end of tRNA(Tyr). This chain is Tyrosine--tRNA ligase, found in Streptococcus pneumoniae (strain Taiwan19F-14).